The sequence spans 274 residues: HMP-PP phosphatase (274 aa).

Asp8 acts as the Nucleophile in catalysis. 3 residues coordinate Mg(2+): Asp8, Asp10, and Asp213.

This sequence belongs to the HAD-like hydrolase superfamily. Cof family. It depends on Mg(2+) as a cofactor.

The catalysed reaction is 4-amino-2-methyl-5-(diphosphooxymethyl)pyrimidine + H2O = 4-amino-2-methyl-5-(phosphooxymethyl)pyrimidine + phosphate + H(+). Its function is as follows. Catalyzes the hydrolysis of 4-amino-2-methyl-5-hydroxymethylpyrimidine pyrophosphate (HMP-PP) to 4-amino-2-methyl-5-hydroxymethylpyrimidine phosphate (HMP-P). This Serratia proteamaculans (strain 568) protein is HMP-PP phosphatase.